Reading from the N-terminus, the 215-residue chain is Pyrrolidone-carboxylate peptidase (215 aa).

Active-site residues include Glu-80, Cys-143, and His-167.

The protein belongs to the peptidase C15 family. As to quaternary structure, homotetramer.

It is found in the cytoplasm. The enzyme catalyses Release of an N-terminal pyroglutamyl group from a polypeptide, the second amino acid generally not being Pro.. Its function is as follows. Removes 5-oxoproline from various penultimate amino acid residues except L-proline. The chain is Pyrrolidone-carboxylate peptidase from Bacillus cereus (strain ATCC 10987 / NRS 248).